The chain runs to 242 residues: Cytochrome c oxidase subunit 2 (242 aa).

Residues 1–30 (MSFYGSRYFGDIVHGELGKDLFRYHGFVMM) lie on the Mitochondrial intermembrane side of the membrane. Residues 31–47 (VAVAVLVFVMYMGCVIL) traverse the membrane as a helical segment. Residues 48 to 66 (FTKFSYRHFLNRQRLEFWW) are Mitochondrial matrix-facing. Residues 67–83 (TIVPMLMLVGLWXPSMI) traverse the membrane as a helical segment. The Mitochondrial intermembrane segment spans residues 84–242 (NLYYMEEVKR…YFVMWLEALN (159 aa)). His176, Cys211, Glu213, Cys215, His219, and Met222 together coordinate Cu cation. Glu213 lines the Mg(2+) pocket.

It belongs to the cytochrome c oxidase subunit 2 family. In terms of assembly, component of the cytochrome c oxidase (complex IV, CIV), a multisubunit enzyme composed of a catalytic core of 3 subunits and several supernumerary subunits. The complex exists as a monomer or a dimer and forms supercomplexes (SCs) in the inner mitochondrial membrane with ubiquinol-cytochrome c oxidoreductase (cytochrome b-c1 complex, complex III, CIII). It depends on Cu cation as a cofactor.

Its subcellular location is the mitochondrion inner membrane. It carries out the reaction 4 Fe(II)-[cytochrome c] + O2 + 8 H(+)(in) = 4 Fe(III)-[cytochrome c] + 2 H2O + 4 H(+)(out). In terms of biological role, component of the cytochrome c oxidase, the last enzyme in the mitochondrial electron transport chain which drives oxidative phosphorylation. The respiratory chain contains 3 multisubunit complexes succinate dehydrogenase (complex II, CII), ubiquinol-cytochrome c oxidoreductase (cytochrome b-c1 complex, complex III, CIII) and cytochrome c oxidase (complex IV, CIV), that cooperate to transfer electrons derived from NADH and succinate to molecular oxygen, creating an electrochemical gradient over the inner membrane that drives transmembrane transport and the ATP synthase. Cytochrome c oxidase is the component of the respiratory chain that catalyzes the reduction of oxygen to water. Electrons originating from reduced cytochrome c in the intermembrane space (IMS) are transferred via the dinuclear copper A center (CU(A)) of subunit 2 and heme A of subunit 1 to the active site in subunit 1, a binuclear center (BNC) formed by heme A3 and copper B (CU(B)). The BNC reduces molecular oxygen to 2 water molecules using 4 electrons from cytochrome c in the IMS and 4 protons from the mitochondrial matrix. The chain is Cytochrome c oxidase subunit 2 (COII) from Mytilus edulis (Blue mussel).